A 582-amino-acid polypeptide reads, in one-letter code: Phosphoglucomutase, cytoplasmic (582 aa).

Residues Arg25 and Ser124 each contribute to the alpha-D-glucose 1,6-bisphosphate site. The active-site Phosphoserine intermediate is Ser124. Positions 124, 299, 301, and 303 each coordinate Mg(2+). Ser124 is subject to Phosphoserine. The alpha-D-glucose 1,6-bisphosphate site is built by Asp303, Arg304, Thr367, Glu386, Ser388, and Lys399.

This sequence belongs to the phosphohexose mutase family. Monomer. It depends on Mg(2+) as a cofactor.

It localises to the cytoplasm. It catalyses the reaction alpha-D-glucose 1-phosphate = alpha-D-glucose 6-phosphate. It carries out the reaction O-phospho-L-seryl-[protein] + alpha-D-glucose 1-phosphate = alpha-D-glucose 1,6-bisphosphate + L-seryl-[protein]. The enzyme catalyses alpha-D-glucose 1,6-bisphosphate + L-seryl-[protein] = O-phospho-L-seryl-[protein] + alpha-D-glucose 6-phosphate. Functionally, catalyzes the reversible isomerization of alpha-D-glucose 1-phosphate to alpha-D-glucose 6-phosphate. The mechanism proceeds via the intermediate compound alpha-D-glucose 1,6-bisphosphate. This enzyme participates in both the breakdown and synthesis of glucose. This chain is Phosphoglucomutase, cytoplasmic (PGM1), found in Populus tremula (European aspen).